The sequence spans 342 residues: Dihydroorotase (342 aa).

His-13 and His-15 together coordinate Zn(2+). Substrate is bound by residues 15 to 17 and Asn-41; that span reads HLR. Residues Lys-98, His-135, and His-173 each coordinate Zn(2+). At Lys-98 the chain carries N6-carboxylysine. His-135 serves as a coordination point for substrate. Leu-218 serves as a coordination point for substrate. Zn(2+) is bound at residue Asp-246. Residue Asp-246 is part of the active site. Residues His-250 and Ala-262 each coordinate substrate.

Belongs to the metallo-dependent hydrolases superfamily. DHOase family. Class II DHOase subfamily. As to quaternary structure, homodimer. Zn(2+) is required as a cofactor.

It carries out the reaction (S)-dihydroorotate + H2O = N-carbamoyl-L-aspartate + H(+). The protein operates within pyrimidine metabolism; UMP biosynthesis via de novo pathway; (S)-dihydroorotate from bicarbonate: step 3/3. Its function is as follows. Catalyzes the reversible cyclization of carbamoyl aspartate to dihydroorotate. This Aliivibrio fischeri (strain ATCC 700601 / ES114) (Vibrio fischeri) protein is Dihydroorotase.